Here is a 101-residue protein sequence, read N- to C-terminus: Small ribosomal subunit protein uS14 (101 aa).

It belongs to the universal ribosomal protein uS14 family. As to quaternary structure, part of the 30S ribosomal subunit. Contacts proteins S3 and S10.

In terms of biological role, binds 16S rRNA, required for the assembly of 30S particles and may also be responsible for determining the conformation of the 16S rRNA at the A site. In Paracoccus denitrificans (strain Pd 1222), this protein is Small ribosomal subunit protein uS14.